The following is a 151-amino-acid chain: Large ribosomal subunit protein bL9 (151 aa).

This sequence belongs to the bacterial ribosomal protein bL9 family.

Binds to the 23S rRNA. This chain is Large ribosomal subunit protein bL9, found in Pelodictyon phaeoclathratiforme (strain DSM 5477 / BU-1).